The primary structure comprises 316 residues: Pyridoxal 5'-phosphate synthase subunit PdxS (316 aa).

Asp44 is a binding site for D-ribose 5-phosphate. The Schiff-base intermediate with D-ribose 5-phosphate role is filled by Lys101. Gly173 lines the D-ribose 5-phosphate pocket. Lys185 lines the D-glyceraldehyde 3-phosphate pocket. D-ribose 5-phosphate-binding positions include Gly234 and 255–256 (GS).

It belongs to the PdxS/SNZ family. As to quaternary structure, in the presence of PdxT, forms a dodecamer of heterodimers.

It carries out the reaction aldehydo-D-ribose 5-phosphate + D-glyceraldehyde 3-phosphate + L-glutamine = pyridoxal 5'-phosphate + L-glutamate + phosphate + 3 H2O + H(+). It functions in the pathway cofactor biosynthesis; pyridoxal 5'-phosphate biosynthesis. Its function is as follows. Catalyzes the formation of pyridoxal 5'-phosphate from ribose 5-phosphate (RBP), glyceraldehyde 3-phosphate (G3P) and ammonia. The ammonia is provided by the PdxT subunit. Can also use ribulose 5-phosphate and dihydroxyacetone phosphate as substrates, resulting from enzyme-catalyzed isomerization of RBP and G3P, respectively. This Sulfurisphaera tokodaii (strain DSM 16993 / JCM 10545 / NBRC 100140 / 7) (Sulfolobus tokodaii) protein is Pyridoxal 5'-phosphate synthase subunit PdxS.